The sequence spans 416 residues: Enterobactin exporter EntS (416 aa).

Residues 1-21 are Cytoplasmic-facing; the sequence is MNKQSWLLNLSLLKTHPAFRA. The helical transmembrane segment at 22-42 threads the bilayer; that stretch reads VFLARFISIVSLGLLGVAVPV. Residues 43–55 are Periplasmic-facing; sequence QIQMMTHSTWQVG. The chain crosses the membrane as a helical span at residues 56-76; it reads LSVTLTGGAMFVGLMVGGVLA. The Cytoplasmic portion of the chain corresponds to 77-83; sequence DRYERKK. Residues 84–104 traverse the membrane as a helical segment; sequence VILLARGTCGIGFIGLCLNAL. Residues 105–109 are Periplasmic-facing; the sequence is LPEPS. The chain crosses the membrane as a helical span at residues 110–130; it reads LLAIYLLGLWDGFFASLGVTA. The Cytoplasmic segment spans residues 131-156; it reads LLAATPALVGRENLMQAGAITMLTVR. The chain crosses the membrane as a helical span at residues 157 to 177; it reads LGSVISPMIGGLLLATGGVAW. Position 178 (Asn178) is a topological domain, periplasmic. The chain crosses the membrane as a helical span at residues 179-199; it reads YGLAAAGTFITLLPLLSLPAL. The Cytoplasmic segment spans residues 200-218; it reads PPPPQPREHPLKSLLAGFR. Residues 219 to 239 traverse the membrane as a helical segment; that stretch reads FLLASPLVGGIALLGGLLTMA. The Periplasmic portion of the chain corresponds to 240–256; sequence SAVRVLYPALADNWQMS. Residues 257–277 form a helical membrane-spanning segment; sequence AAQIGFLYAAIPLGAAIGALT. Topologically, residues 278-287 are cytoplasmic; that stretch reads SGKLAHSVRP. The chain crosses the membrane as a helical span at residues 288 to 307; the sequence is GLLMLLSTLGAFLAIGLFGL. At 308–313 the chain is on the periplasmic side; sequence MPMWIL. Residues 314–336 form a helical membrane-spanning segment; it reads GVVCLALFGWLSAVSSLLQYTML. Over 337-356 the chain is Cytoplasmic; sequence QTQTPEAMLGRINGLWTAQN. A helical membrane pass occupies residues 357-377; the sequence is VTGDAIGAALLGGLGAMMTPV. A topological domain (periplasmic) is located at residue Ala378. The helical transmembrane segment at 379–399 threads the bilayer; sequence SASASGFGLLIIGVLLLLVLV. The Cytoplasmic portion of the chain corresponds to 400-416; the sequence is ELRRFRQTPPQVTASGS.

The protein belongs to the major facilitator superfamily. EntS (TC 2.A.1.38) family.

It localises to the cell inner membrane. Its function is as follows. Component of an export pathway for enterobactin. The chain is Enterobactin exporter EntS from Escherichia coli O6:K15:H31 (strain 536 / UPEC).